Consider the following 184-residue polypeptide: MISPNHLILLFCVNCAFLVASDATPKRSPLGTMRFGKRAIADEMTFEEDGYYPSNVMWKRSTVDSSEPVIRDQRTPLGTMRFGKRSAEPFGTMRFGKRNPENDTPFGTMRFGKRASEDALFGTMRFGKREDGNAPFGTMKFGKREAEEPLGTMRFGKRSADDSAPFGTMRFGKRNPLGTMRFGK.

Positions 1–23 (MISPNHLILLFCVNCAFLVASDA) are cleaved as a signal peptide. A propeptide spanning residues 24–25 (TP) is cleaved from the precursor. F35 is modified (phenylalanine amide). Positions 39–73 (AIADEMTFEEDGYYPSNVMWKRSTVDSSEPVIRDQ) are excised as a propeptide. Residues F82, F95, F111, and F126 each carry the phenylalanine amide modification. Residues 90–110 (FGTMRFGKRNPENDTPFGTMR) are disordered. Positions 130–142 (EDGNAPFGTMKFG) are excised as a propeptide. Positions 150-184 (LGTMRFGKRSADDSAPFGTMRFGKRNPLGTMRFGK) are disordered. Residues F155, F171, and F182 each carry the phenylalanine amide modification.

It belongs to the FARP (FMRFamide related peptide) family. In terms of tissue distribution, each flp gene is expressed in a distinct set of neurons. Flp-3 is expressed in the IL1 and PQR neurons.

Its subcellular location is the secreted. In terms of biological role, FMRFamides and FMRFamide-like peptides are neuropeptides. SAEPFGTMRF-amide inhibits the activity of dissected pharyngeal myogenic muscle system. In Caenorhabditis elegans, this protein is FMRFamide-like neuropeptides 3.